Here is a 901-residue protein sequence, read N- to C-terminus: HTH-type transcriptional regulator MalT (901 aa).

39-46 (SPAGYGKT) contacts ATP. One can recognise an HTH luxR-type domain in the interval 829–894 (ELIRTSPLTQ…AAVQHAQKLL (66 aa)). A DNA-binding region (H-T-H motif) is located at residues 853-872 (NEQIAGELEVAATTIKTHIR).

It belongs to the MalT family. In terms of assembly, monomer in solution. Oligomerizes to an active state in the presence of the positive effectors ATP and maltotriose.

Its activity is regulated as follows. Activated by ATP and maltotriose, which are both required for DNA binding. In terms of biological role, positively regulates the transcription of the maltose regulon whose gene products are responsible for uptake and catabolism of malto-oligosaccharides. Specifically binds to the promoter region of its target genes, recognizing a short DNA motif called the MalT box. The protein is HTH-type transcriptional regulator MalT of Escherichia coli O7:K1 (strain IAI39 / ExPEC).